Consider the following 464-residue polypeptide: MLTTDSDPIVAIATAPGRGGIGVVRISFGRAGEAAAQPLMQALTGQTLAARRASYVPFLDASGDALDRGIALYFPAPHSYTGEHVLELQGHGGPVVLQLVLQRCIDAGRAFGLRLAEPGEFTRRAFLNDKLDLAQAEAVADLIEASTEAAARSAGRSLDGAFSRDIHALVEDVITLRMLVEATLDFPEEEIDFLEAADARGKLARIRERLGHVLSEARQGALLREGLSVVLAGQPNVGKSSLLNALAGAELAIVTPIAGTTRDKVAQTIQIEGIPLHVIDTAGLRDTEDEVEKIGIARTWNEIERADVVLHLLDARTGMTVEDEAIAGRFPAGVPVVRVLNKTDLTGLAPATRALDADLDLSEVRLSAKQGDGVALLREELLRIAGWQAGAESVYLARERHLIALRAAEEHLATAAAHADQNSQALDLFAEELRLAQDQLNSITGEFSSDDLLGVIFSRFCIGK.

(6S)-5-formyl-5,6,7,8-tetrahydrofolate-binding residues include arginine 25, glutamate 87, and lysine 130. The TrmE-type G domain occupies 226-386 (GLSVVLAGQP…LREELLRIAG (161 aa)). Position 236 (asparagine 236) interacts with K(+). GTP is bound by residues 236–241 (NVGKSS), 255–261 (TPIAGTT), and 280–283 (DTAG). Serine 240 contributes to the Mg(2+) binding site. The K(+) site is built by threonine 255, isoleucine 257, and threonine 260. Threonine 261 contacts Mg(2+). Residue lysine 464 coordinates (6S)-5-formyl-5,6,7,8-tetrahydrofolate.

The protein belongs to the TRAFAC class TrmE-Era-EngA-EngB-Septin-like GTPase superfamily. TrmE GTPase family. As to quaternary structure, homodimer. Heterotetramer of two MnmE and two MnmG subunits. Requires K(+) as cofactor.

The protein localises to the cytoplasm. In terms of biological role, exhibits a very high intrinsic GTPase hydrolysis rate. Involved in the addition of a carboxymethylaminomethyl (cmnm) group at the wobble position (U34) of certain tRNAs, forming tRNA-cmnm(5)s(2)U34. The protein is tRNA modification GTPase MnmE of Paraburkholderia xenovorans (strain LB400).